The sequence spans 47 residues: Lysis protein for colicins E2 and E3 (47 aa).

The N-terminal stretch at 1 to 19 is a signal peptide; that stretch reads MKKITGIILLLLAVIILSA. A lipid anchor (N-palmitoyl cysteine) is attached at cysteine 20. Residue cysteine 20 is the site of S-diacylglycerol cysteine attachment.

The protein localises to the cell outer membrane. Lysis proteins are required for both colicin release and partial cell lysis. The protein is Lysis protein for colicins E2 and E3 (hic) of Escherichia coli.